The primary structure comprises 343 residues: Mitotic checkpoint protein bub-3 (343 aa).

WD repeat units lie at residues Pro-21–Glu-62, Thr-67–Leu-105, Ser-107–Ile-146, Asn-150–Gln-187, Pro-192–Lys-232, Glu-249–Gln-288, and Lys-291–Thr-331. The segment at Pro-322–Lys-343 is disordered. Basic and acidic residues predominate over residues His-334–Lys-343.

This sequence belongs to the WD repeat BUB3 family. May interact with bub-1; for localization at the kinetochore and the onset of anaphase.

It localises to the chromosome. It is found in the centromere. The protein resides in the kinetochore. Its subcellular location is the nucleus. Its function is as follows. Has a dual function in spindle-assembly checkpoint signaling and in promoting the establishment of correct kinetochore-microtubule (K-MT) attachments. Promotes the formation of stable end-on bipolar attachments of chromosomes. Necessary for expression and kinetochore localization of bub-1. Plays a role in synapsis checkpoint signaling inducing apoptosis in response to unsynapsed chromosomes and thus controlling chromosomal segregation during oocyte meiosis. This Caenorhabditis elegans protein is Mitotic checkpoint protein bub-3.